The chain runs to 769 residues: Phosphoribosylformylglycinamidine synthase subunit PurL (769 aa).

A compositionally biased stretch (polar residues) spans 1-13 (MTGTPSAPTTSPD). Positions 1-30 (MTGTPSAPTTSPDDQADGPGEGTVDRQPYR) are disordered. Residue histidine 65 is part of the active site. ATP contacts are provided by tyrosine 68 and lysine 109. Glutamate 111 is a binding site for Mg(2+). Substrate is bound by residues 112–115 (SHNH) and arginine 134. Histidine 113 (proton acceptor) is an active-site residue. Aspartate 135 lines the Mg(2+) pocket. A substrate-binding site is contributed by glutamine 260. Aspartate 288 serves as a coordination point for Mg(2+). 337-339 (ESQ) serves as a coordination point for substrate. 2 residues coordinate ATP: asparagine 524 and glycine 561. A Mg(2+)-binding site is contributed by asparagine 562. Serine 564 serves as a coordination point for substrate.

It belongs to the FGAMS family. As to quaternary structure, monomer. Part of the FGAM synthase complex composed of 1 PurL, 1 PurQ and 2 PurS subunits.

The protein resides in the cytoplasm. It carries out the reaction N(2)-formyl-N(1)-(5-phospho-beta-D-ribosyl)glycinamide + L-glutamine + ATP + H2O = 2-formamido-N(1)-(5-O-phospho-beta-D-ribosyl)acetamidine + L-glutamate + ADP + phosphate + H(+). The protein operates within purine metabolism; IMP biosynthesis via de novo pathway; 5-amino-1-(5-phospho-D-ribosyl)imidazole from N(2)-formyl-N(1)-(5-phospho-D-ribosyl)glycinamide: step 1/2. In terms of biological role, part of the phosphoribosylformylglycinamidine synthase complex involved in the purines biosynthetic pathway. Catalyzes the ATP-dependent conversion of formylglycinamide ribonucleotide (FGAR) and glutamine to yield formylglycinamidine ribonucleotide (FGAM) and glutamate. The FGAM synthase complex is composed of three subunits. PurQ produces an ammonia molecule by converting glutamine to glutamate. PurL transfers the ammonia molecule to FGAR to form FGAM in an ATP-dependent manner. PurS interacts with PurQ and PurL and is thought to assist in the transfer of the ammonia molecule from PurQ to PurL. This Parafrankia sp. (strain EAN1pec) protein is Phosphoribosylformylglycinamidine synthase subunit PurL.